The following is a 312-amino-acid chain: Ribosomal RNA small subunit methyltransferase H (312 aa).

Residues 35 to 37, aspartate 55, phenylalanine 79, aspartate 101, and glutamine 108 contribute to the S-adenosyl-L-methionine site; that span reads GGH.

Belongs to the methyltransferase superfamily. RsmH family.

Its subcellular location is the cytoplasm. The enzyme catalyses cytidine(1402) in 16S rRNA + S-adenosyl-L-methionine = N(4)-methylcytidine(1402) in 16S rRNA + S-adenosyl-L-homocysteine + H(+). Its function is as follows. Specifically methylates the N4 position of cytidine in position 1402 (C1402) of 16S rRNA. The protein is Ribosomal RNA small subunit methyltransferase H of Buchnera aphidicola subsp. Acyrthosiphon pisum (strain APS) (Acyrthosiphon pisum symbiotic bacterium).